Consider the following 260-residue polypeptide: Thrombin-like enzyme acutobin (260 aa).

Residues 1-18 (MVLIRVLANLLILQLSYA) form the signal peptide. A propeptide spanning residues 19–24 (QKSSEL) is cleaved from the precursor. Residues 25–251 (VIGGVECDIN…YNDWIRSITA (227 aa)) enclose the Peptidase S1 domain. Disulfide bonds link Cys-31–Cys-165, Cys-52–Cys-68, Cys-102–Cys-258, Cys-144–Cys-212, Cys-176–Cys-191, and Cys-202–Cys-227. Residue His-67 is the Charge relay system of the active site. Residues Asn-101 and Asn-105 are each glycosylated (N-linked (GlcNAc...) asparagine). Asp-112 acts as the Charge relay system in catalysis. A glycan (N-linked (GlcNAc...) asparagine) is linked at Asn-124. Ser-206 functions as the Charge relay system in the catalytic mechanism. A glycan (N-linked (GlcNAc...) asparagine) is linked at Asn-253.

Belongs to the peptidase S1 family. Snake venom subfamily. Monomer. N-glycosylated. As to expression, expressed by the venom gland.

It is found in the secreted. Its function is as follows. Thrombin-like snake venom serine protease that coagulates human fibrinogen by hydrolysis of the alpha chains (FGA). The sequence is that of Thrombin-like enzyme acutobin from Deinagkistrodon acutus (Hundred-pace snake).